Consider the following 1593-residue polypeptide: ABC transporter C family member 8 (1593 aa).

The next 10 helical transmembrane spans lie at 27–47, 75–95, 100–120, 135–155, 169–189, 280–300, 318–338, 392–412, 419–439, and 505–525; these read VVMTLPAIYLLIFGMKRLYYL, VIVSILLVAWKILFFIVIVSI, FEILYSVVTVVQWTVSLGLVY, LYWVFAFFVATVKLRTLTLAI, FSYFVGYCLILILSITSVLFF, FYIAALFKIIQDLLIFVGPTL, YDGLIYALLYFLAPVVQSLLL, LCPYLHMIWSAPLQLAISLVL, ASVFAGLGIMLVMIPINLAIS, and LLLWSMSPVFVSVSTFTVYIL. Residues 280-561 form the ABC transmembrane type-1 1 domain; that stretch reads FYIAALFKII…LPSVVSSIIE (282 aa). The region spanning 594-818 is the ABC transporter 1 domain; sequence VKIDNATLEW…GSHFTELMSH (225 aa). ATP is bound at residue 627-634; it reads GQVGSGKS. Residues 816–938 are disordered; that stretch reads MSHDEQQQQL…PLQKGEKSSV (123 aa). Positions 844–875 form a coiled coil; sequence GDNKESENNEEQNEEEEGENENLLEKVLRKSR. Positions 851 to 865 are enriched in acidic residues; the sequence is NNEEQNEEEEGENEN. Positions 877–886 are enriched in low complexity; it reads RSPSPSSNRN. Residues 905-922 are compositionally biased toward acidic residues; sequence EEDEQDERELMEDIDIDG. 5 helical membrane passes run 1005–1025, 1064–1084, 1157–1177, 1251–1271, and 1280–1300; these read IGVLLATCIIGFYVLTQLLSI, AKYYLSIYVAFSCGTIAATFL, IIVIAWVSPFIILAMVPVGAL, LAIRLEFLGACLVSCAVLYTV, and GTAGLVITYALAITGNMNWMV. Residues 1010–1308 enclose the ABC transmembrane type-1 2 domain; it reads ATCIIGFYVL…MVRMSCDLEN (299 aa). In terms of domain architecture, ABC transporter 2 spans 1344–1578; sequence IVFKNLWLTY…QDSIYYSLVK (235 aa). 1378–1385 provides a ligand contact to ATP; it reads GRTGAGKS.

Belongs to the ABC transporter superfamily. ABCC family. Conjugate transporter (TC 3.A.1.208) subfamily.

The protein resides in the membrane. This is ABC transporter C family member 8 (abcC8) from Dictyostelium discoideum (Social amoeba).